A 277-amino-acid chain; its full sequence is Sulfur carrier protein FdhD (277 aa).

Cysteine 121 functions as the Cysteine persulfide intermediate in the catalytic mechanism. A Mo-bis(molybdopterin guanine dinucleotide)-binding site is contributed by 260 to 265 (FCKPGR).

Belongs to the FdhD family.

The protein localises to the cytoplasm. Required for formate dehydrogenase (FDH) activity. Acts as a sulfur carrier protein that transfers sulfur from IscS to the molybdenum cofactor prior to its insertion into FDH. The polypeptide is Sulfur carrier protein FdhD (Escherichia coli O6:K15:H31 (strain 536 / UPEC)).